The primary structure comprises 79 residues: Exodeoxyribonuclease 7 small subunit (79 aa).

This sequence belongs to the XseB family. As to quaternary structure, heterooligomer composed of large and small subunits.

The protein resides in the cytoplasm. The catalysed reaction is Exonucleolytic cleavage in either 5'- to 3'- or 3'- to 5'-direction to yield nucleoside 5'-phosphates.. In terms of biological role, bidirectionally degrades single-stranded DNA into large acid-insoluble oligonucleotides, which are then degraded further into small acid-soluble oligonucleotides. In Lactococcus lactis subsp. cremoris (strain SK11), this protein is Exodeoxyribonuclease 7 small subunit.